The sequence spans 289 residues: Early E4 34 kDa protein (289 aa).

The protein belongs to the adenoviridae E4 30 to 34 kDa protein family. As to quaternary structure, interacts with E1B-55k.

The protein localises to the host nucleus. It localises to the host cytoplasm. Its function is as follows. Plays a major role to prevent cellular inhibition of viral genome replication by nuclear bodies. Assembles an SCF-like E3 ubiquitin ligase complex based on the cellular proteins ELOB, ELOC, CUL5 and RBX1, in cooperation with viral E1B-55K. This viral RING-type ligase ubiquitinates cellular substrates prior to proteasomal degradation: p53/TP53, LIG4, MRE11-RAD50-NBS1 (MRN) complex, ITGA3, DAXX and BLM. In Human adenovirus F serotype 40 (HAdV-40), this protein is Early E4 34 kDa protein.